The following is a 209-amino-acid chain: FMN-dependent NADH:quinone oxidoreductase (209 aa).

Residues Ser-9 and 15–17 (SNS) contribute to the FMN site.

Belongs to the azoreductase type 1 family. As to quaternary structure, homodimer. FMN serves as cofactor.

It carries out the reaction 2 a quinone + NADH + H(+) = 2 a 1,4-benzosemiquinone + NAD(+). The catalysed reaction is N,N-dimethyl-1,4-phenylenediamine + anthranilate + 2 NAD(+) = 2-(4-dimethylaminophenyl)diazenylbenzoate + 2 NADH + 2 H(+). In terms of biological role, quinone reductase that provides resistance to thiol-specific stress caused by electrophilic quinones. Its function is as follows. Also exhibits azoreductase activity. Catalyzes the reductive cleavage of the azo bond in aromatic azo compounds to the corresponding amines. The chain is FMN-dependent NADH:quinone oxidoreductase from Bordetella parapertussis (strain 12822 / ATCC BAA-587 / NCTC 13253).